The primary structure comprises 1178 residues: Topoisomerase 1-associated factor 1 (1178 aa).

Disordered stretches follow at residues 576 to 596 (KQDD…DEEL), 792 to 811 (SWES…PMIP), 896 to 965 (DARG…VLEE), and 980 to 1178 (KIKS…SDSE). Over residues 580–596 (QAIDVEDEEHASEDEEL) the composition is skewed to acidic residues. A compositionally biased stretch (basic and acidic residues) spans 896–905 (DARGGGRDEQ). Residues 911–921 (FGSDSEGEDNV) show a composition bias toward acidic residues. 3 stretches are compositionally biased toward basic and acidic residues: residues 981–991 (IKSDLYIHASD), 1001–1015 (EFFR…EQAA), and 1025–1034 (VVEEISDKSS). Residues 1079 to 1092 (EAQSPDSPGLGSSS) show a composition bias toward polar residues. Over residues 1105 to 1116 (SDEDELEFDDDL) the composition is skewed to acidic residues. The segment covering 1117–1128 (AFSRDRNRRKDF) has biased composition (basic and acidic residues). Over residues 1138–1147 (EPAQQDADPA) the composition is skewed to low complexity. Residues 1148 to 1157 (APDEDDDEDA) show a composition bias toward acidic residues.

Belongs to the timeless family. As to quaternary structure, component of the fork protection complex (FPC) consisting of tof1 and csm3.

Its subcellular location is the nucleus. Its function is as follows. Forms a fork protection complex (FPC) with csm3 and which is required for chromosome segregation during meiosis and DNA damage repair. FPC coordinates leading and lagging strand synthesis and moves with the replication fork. FPC stabilizes replication forks in a configuration that is recognized by replication checkpoint sensors. This chain is Topoisomerase 1-associated factor 1 (tof1), found in Aspergillus clavatus (strain ATCC 1007 / CBS 513.65 / DSM 816 / NCTC 3887 / NRRL 1 / QM 1276 / 107).